The primary structure comprises 373 residues: Dual-specificity RNA methyltransferase RlmN (373 aa).

The active-site Proton acceptor is Glu-94. A Radical SAM core domain is found at 100-339; that stretch reads EDDRATLCVS…VIVRKTRGDD (240 aa). The cysteines at positions 107 and 344 are disulfide-linked. Cys-114, Cys-118, and Cys-121 together coordinate [4Fe-4S] cluster. S-adenosyl-L-methionine contacts are provided by residues 168-169, Ser-200, 222-224, and Asn-301; these read GE and SIH. Cys-344 serves as the catalytic S-methylcysteine intermediate.

Belongs to the radical SAM superfamily. RlmN family. The cofactor is [4Fe-4S] cluster.

The protein resides in the cytoplasm. It carries out the reaction adenosine(2503) in 23S rRNA + 2 reduced [2Fe-2S]-[ferredoxin] + 2 S-adenosyl-L-methionine = 2-methyladenosine(2503) in 23S rRNA + 5'-deoxyadenosine + L-methionine + 2 oxidized [2Fe-2S]-[ferredoxin] + S-adenosyl-L-homocysteine. The catalysed reaction is adenosine(37) in tRNA + 2 reduced [2Fe-2S]-[ferredoxin] + 2 S-adenosyl-L-methionine = 2-methyladenosine(37) in tRNA + 5'-deoxyadenosine + L-methionine + 2 oxidized [2Fe-2S]-[ferredoxin] + S-adenosyl-L-homocysteine. Its function is as follows. Specifically methylates position 2 of adenine 2503 in 23S rRNA and position 2 of adenine 37 in tRNAs. m2A2503 modification seems to play a crucial role in the proofreading step occurring at the peptidyl transferase center and thus would serve to optimize ribosomal fidelity. The sequence is that of Dual-specificity RNA methyltransferase RlmN from Shewanella baltica (strain OS185).